The following is a 437-amino-acid chain: UDP-N-acetylmuramate--L-alanine ligase (437 aa).

Residue 114 to 120 (GTHGKTS) participates in ATP binding.

It belongs to the MurCDEF family.

The protein resides in the cytoplasm. It carries out the reaction UDP-N-acetyl-alpha-D-muramate + L-alanine + ATP = UDP-N-acetyl-alpha-D-muramoyl-L-alanine + ADP + phosphate + H(+). Its pathway is cell wall biogenesis; peptidoglycan biosynthesis. In terms of biological role, cell wall formation. In Lactobacillus johnsonii (strain CNCM I-12250 / La1 / NCC 533), this protein is UDP-N-acetylmuramate--L-alanine ligase.